Here is a 357-residue protein sequence, read N- to C-terminus: 3-dehydroquinate synthase (357 aa).

Residues 104–108 (GVVGD), 128–129 (TT), Lys141, and 168–171 (FLET) each bind NAD(+). Glu183, His243, and His260 together coordinate Zn(2+).

Belongs to the sugar phosphate cyclases superfamily. Dehydroquinate synthase family. Requires NAD(+) as cofactor. The cofactor is Co(2+). Zn(2+) serves as cofactor.

The protein resides in the cytoplasm. It carries out the reaction 7-phospho-2-dehydro-3-deoxy-D-arabino-heptonate = 3-dehydroquinate + phosphate. Its pathway is metabolic intermediate biosynthesis; chorismate biosynthesis; chorismate from D-erythrose 4-phosphate and phosphoenolpyruvate: step 2/7. In terms of biological role, catalyzes the conversion of 3-deoxy-D-arabino-heptulosonate 7-phosphate (DAHP) to dehydroquinate (DHQ). The sequence is that of 3-dehydroquinate synthase from Streptococcus pyogenes serotype M3 (strain ATCC BAA-595 / MGAS315).